We begin with the raw amino-acid sequence, 238 residues long: Flagellar L-ring protein (238 aa).

The N-terminal stretch at 1–23 (MIKLFICQKKYYLTAIFLLTIQS) is a signal peptide. The N-palmitoyl cysteine moiety is linked to residue C24. A lipid anchor (S-diacylglycerol cysteine) is attached at C24.

The protein belongs to the FlgH family. In terms of assembly, the basal body constitutes a major portion of the flagellar organelle and consists of four rings (L,P,S, and M) mounted on a central rod.

The protein localises to the cell outer membrane. The protein resides in the bacterial flagellum basal body. In terms of biological role, assembles around the rod to form the L-ring and probably protects the motor/basal body from shearing forces during rotation. The polypeptide is Flagellar L-ring protein (Buchnera aphidicola subsp. Acyrthosiphon pisum (strain 5A)).